The chain runs to 80 residues: Toxin-like peptide AaF1CA1 (80 aa).

Residues 1–22 (MMKLVLFSVIVILFSLIGSIHG) form the signal peptide. Residues 25–80 (VPGNYPLRPFRYRYGCAVPGDSDYCVRVCRKHGVRYGYCWFFTCWCEYLEDKNIKI) form the LCN-type CS-alpha/beta domain. 3 disulfides stabilise this stretch: Cys-40-Cys-63, Cys-49-Cys-68, and Cys-53-Cys-70.

It belongs to the long (3 C-C) scorpion toxin superfamily. In terms of tissue distribution, expressed by the venom gland.

It is found in the secreted. Probable ion channel inhibitor. This chain is Toxin-like peptide AaF1CA1, found in Androctonus australis (Sahara scorpion).